We begin with the raw amino-acid sequence, 513 residues long: Ribonuclease Y (513 aa).

A helical membrane pass occupies residues 4–24 (NTAIIIAITTGFVAFIGGYFL). In terms of domain architecture, KH spans 203 to 266 (TVAVIPLPNE…ETARMALEKL (64 aa)). Residues 329 to 422 (VLKHSVEVAY…IQAADAISAA (94 aa)) enclose the HD domain.

Belongs to the RNase Y family.

It localises to the cell membrane. Functionally, endoribonuclease that initiates mRNA decay. The protein is Ribonuclease Y of Desulforudis audaxviator (strain MP104C).